Here is a 792-residue protein sequence, read N- to C-terminus: Receptor-like protein 54 (792 aa).

The signal sequence occupies residues 1–21; it reads MKSNLAVFFITCFFCCVFVTS. Topologically, residues 22–758 are extracellular; that stretch reads DSVYTLPFPF…PKQEHALNWK (737 aa). Residues Asn-68 and Asn-107 are each glycosylated (N-linked (GlcNAc...) asparagine). LRR repeat units lie at residues 114-137, 139-162, 163-187, 189-209, 211-233, 235-258, 259-282, 283-302, 303-324, 325-349, 351-374, and 375-399; these read QHLR…GFGR, TYLE…ISNL, SRLT…SLTL, ENID…LFTM, FLVS…NYSA, SKLL…ISKL, ANLI…FLLF, KSLV…GTGS, ENLT…FIKD, LQRL…LWTL, SMLH…IILN, and SSIS…PYVN. N-linked (GlcNAc...) asparagine glycosylation is present at Asn-161. N-linked (GlcNAc...) asparagine glycosylation is present at Asn-230. 2 N-linked (GlcNAc...) asparagine glycosylation sites follow: Asn-304 and Asn-314. N-linked (GlcNAc...) asparagine glycosylation is found at Asn-356 and Asn-374. An LRR 13; degenerate repeat occupies 400 to 418; the sequence is IMAASNNYFTGGIPLIFCK. LRR repeat units follow at residues 419-443, 444-470, 472-489, and 490-515; these read RYRL…LTNV, SLGL…RLVL, DVGH…LVNC, and TTLK…ALTR. Asn-431, Asn-442, Asn-454, Asn-488, and Asn-503 each carry an N-linked (GlcNAc...) asparagine glycan. The stretch at 516-536 is one LRR 18; degenerate repeat; the sequence is LEIIVLRSNRFHGPISSPEVS. LRR repeat units lie at residues 539–563, 614–637, 638–661, 662–685, and 687–709; these read FTAL…YFAN, DTYT…IGDL, KSLI…LAKL, KQLE…LREL, and FLGY…TQVG. N-linked (GlcNAc...) asparagine glycosylation is found at Asn-553 and Asn-563. Asn-647 carries N-linked (GlcNAc...) asparagine glycosylation. The N-linked (GlcNAc...) asparagine glycan is linked to Asn-692. A helical transmembrane segment spans residues 759–779; sequence AAAIGYGPGVLFGLAIGQAFA. Over 780-792 the chain is Cytoplasmic; that stretch reads RYKPVLFYKLFRL.

This sequence belongs to the RLP family.

Its subcellular location is the cell membrane. This chain is Receptor-like protein 54, found in Arabidopsis thaliana (Mouse-ear cress).